We begin with the raw amino-acid sequence, 54 residues long: UPF0391 membrane protein Oant_1245 (54 aa).

2 consecutive transmembrane segments (helical) span residues 5–25 and 29–48; these read ALVF…GIAG and GIAQ…SLIA.

This sequence belongs to the UPF0391 family.

The protein localises to the cell membrane. In Brucella anthropi (strain ATCC 49188 / DSM 6882 / CCUG 24695 / JCM 21032 / LMG 3331 / NBRC 15819 / NCTC 12168 / Alc 37) (Ochrobactrum anthropi), this protein is UPF0391 membrane protein Oant_1245.